The chain runs to 192 residues: MGVPDCLALPLLVTFLLLSLGLPVLGAPPRLICDSRVLERYILEAKEAENITMGCAEGPRFNENFTVPDTKVNFYAWKTMGVEEQAVEVWQGLSLLFEAILRAQAVLANSSQPSEMLQLHVDKAISGLRSLTSLLRALGAQKEAISPPDTTQVIPLRRFTVDTFCKLFRIYSNFLRGKLKLYTGEACRRGDR.

Positions 1 to 26 are cleaved as a signal peptide; that stretch reads MGVPDCLALPLLVTFLLLSLGLPVLG. Residues cysteine 33 and cysteine 187 are joined by a disulfide bond. Residues asparagine 50, asparagine 64, and asparagine 109 are each glycosylated (N-linked (GlcNAc...) asparagine).

Belongs to the EPO/TPO family.

Its subcellular location is the secreted. In terms of biological role, hormone involved in the regulation of erythrocyte proliferation and differentiation and the maintenance of a physiological level of circulating erythrocyte mass. Binds to EPOR leading to EPOR dimerization and JAK2 activation thereby activating specific downstream effectors, including STAT1 and STAT3. The chain is Erythropoietin (EPO) from Nannospalax galili (Northern Israeli blind subterranean mole rat).